The chain runs to 326 residues: Elongation factor Ts (326 aa).

The interval 80–83 (TDFV) is involved in Mg(2+) ion dislocation from EF-Tu.

This sequence belongs to the EF-Ts family.

Its subcellular location is the cytoplasm. Functionally, associates with the EF-Tu.GDP complex and induces the exchange of GDP to GTP. It remains bound to the aminoacyl-tRNA.EF-Tu.GTP complex up to the GTP hydrolysis stage on the ribosome. In Rhodopirellula baltica (strain DSM 10527 / NCIMB 13988 / SH1), this protein is Elongation factor Ts.